Here is a 263-residue protein sequence, read N- to C-terminus: Lens fiber major intrinsic protein (263 aa).

Residues 1–9 (MWELRSASF) lie on the Cytoplasmic side of the membrane. The helical transmembrane segment at 10–29 (WRAIFAEFFATLFYVFFGLG) threads the bilayer. Residues 30–41 (SSLRWAPGPLHV) are Extracellular-facing. The chain crosses the membrane as a helical span at residues 42–59 (LQVAMAFGLALATLVQSV). The Cytoplasmic segment spans residues 60 to 61 (GH). The segment at residues 62 to 77 (ISGAHVNPAVTFAFLV) is an intramembrane region (discontinuously helical). Positions 68–70 (NPA) match the NPA 1 motif. The Cytoplasmic segment spans residues 78-82 (GSQMS). The chain crosses the membrane as a helical span at residues 83–106 (LLRAFCYMAAQLLGAVAGAAVLYS). Topologically, residues 107–127 (VTPPAVRGNLALNTLHPAVSV) are extracellular. A helical membrane pass occupies residues 128-148 (GQATTVEIFLTLQFVLCIFAT). Topologically, residues 149–156 (YDERRNGQ) are cytoplasmic. The helical transmembrane segment at 157–175 (LGSVALAVGFSLALGHLFG) threads the bilayer. Residues 176–178 (MYY) lie on the Extracellular side of the membrane. Positions 179 to 193 (TGAGMNPARSFAPAI) form an intramembrane region, discontinuously helical. The short motif at 184–186 (NPA) is the NPA 2 element. At 194 to 200 (LTGNFTN) the chain is on the extracellular side. Residues 201-222 (HWVYWVGPIIGGGLGSLLYDFL) traverse the membrane as a helical segment. Residues 223 to 263 (LFPRLKSISERLSVLKGAKPDVSNGQPEVTGEPVELNTQAL) lie on the Cytoplasmic side of the membrane. Positions 227-237 (LKSISERLSVL) are interaction with CALM. 2 positions are modified to phosphoserine: S235 and S245. Deamidated asparagine; by deterioration occurs at positions 246 and 259.

This sequence belongs to the MIP/aquaporin (TC 1.A.8) family. In terms of assembly, homotetramer; each monomer provides an independent water pore. Two homotetramers on opposing membranes can dimerize, forming a cell-cell junction. Interacts with CALM; the calcium-calmodulin/CALM complex interacts with the cytoplasmic domains of two aquaporins, leading to channel closure. Interacts with BFSP1 (via C-terminus); prevents calcium-dependent inhibition of the water channel activity. In terms of processing, subject to partial proteolytic cleavage in the eye lens core. Partial proteolysis promotes interactions between tetramers from adjoining membranes. Fatty acylated at Met-1 and Lys-238. The acyl modifications, in decreasing order of ion abundance, are: oleoyl (C18:1) &gt; palmitoyl (C16:0) &gt; stearoyl (C18:0) &gt; eicosenoyl (C20:1) &gt; dihomo-gamma-linolenoyl (C20:3) &gt; palmitoleoyl (C16:1) &gt; eicosadienoyl (C20:2). Expressed in the cortex and nucleus of the retina lens (at protein level). Major component of lens fiber gap junctions.

The protein resides in the cell membrane. Its subcellular location is the cell junction. The enzyme catalyses H2O(in) = H2O(out). The water channel activity is inhibited by calcium through calmodulin/CALM. Its function is as follows. Aquaporins form homotetrameric transmembrane channels, with each monomer independently mediating water transport across the plasma membrane along its osmotic gradient. Specifically expressed in lens fiber cells, this aquaporin is crucial for maintaining lens water homeostasis and transparency. Beyond water permeability, it also acts as a cell-to-cell adhesion molecule, forming thin junctions between lens fiber cells that are essential for maintaining the ordered structure and transparency of the lens. The chain is Lens fiber major intrinsic protein from Homo sapiens (Human).